The sequence spans 189 residues: Elongation factor P (189 aa).

An N6-(3,6-diaminohexanoyl)-5-hydroxylysine modification is found at Lys-34.

This sequence belongs to the elongation factor P family. In terms of processing, may be beta-lysylated on the epsilon-amino group of Lys-34 by the combined action of EpmA and EpmB, and then hydroxylated on the C5 position of the same residue by EpmC (if this protein is present). Lysylation is critical for the stimulatory effect of EF-P on peptide-bond formation. The lysylation moiety may extend toward the peptidyltransferase center and stabilize the terminal 3-CCA end of the tRNA. Hydroxylation of the C5 position on Lys-34 may allow additional potential stabilizing hydrogen-bond interactions with the P-tRNA.

The protein localises to the cytoplasm. It functions in the pathway protein biosynthesis; polypeptide chain elongation. Functionally, involved in peptide bond synthesis. Alleviates ribosome stalling that occurs when 3 or more consecutive Pro residues or the sequence PPG is present in a protein, possibly by augmenting the peptidyl transferase activity of the ribosome. Modification of Lys-34 is required for alleviation. The protein is Elongation factor P of Francisella philomiragia subsp. philomiragia (strain ATCC 25017 / CCUG 19701 / FSC 153 / O#319-036).